The sequence spans 252 residues: Triosephosphate isomerase (252 aa).

8 to 10 serves as a coordination point for substrate; the sequence is NWK. His-95 acts as the Electrophile in catalysis. Catalysis depends on Glu-167, which acts as the Proton acceptor. Substrate is bound by residues Gly-173, Ser-212, and 233 to 234; that span reads GG.

It belongs to the triosephosphate isomerase family. As to quaternary structure, homodimer.

It is found in the cytoplasm. It catalyses the reaction D-glyceraldehyde 3-phosphate = dihydroxyacetone phosphate. It participates in carbohydrate biosynthesis; gluconeogenesis. Its pathway is carbohydrate degradation; glycolysis; D-glyceraldehyde 3-phosphate from glycerone phosphate: step 1/1. Its function is as follows. Involved in the gluconeogenesis. Catalyzes stereospecifically the conversion of dihydroxyacetone phosphate (DHAP) to D-glyceraldehyde-3-phosphate (G3P). This is Triosephosphate isomerase from Lawsonia intracellularis (strain PHE/MN1-00).